The sequence spans 201 residues: Ribonuclease MRP protein subunit RMP1 (201 aa).

The helical transmembrane segment at 86–108 (YWQFNGVIALGQFVTLGCTLVTL) threads the bilayer.

As to quaternary structure, component of RNase MRP complex which consists of an RNA moiety and at least 10 protein subunits including POP1, POP3, POP4, POP5, POP6, POP7, POP8, RMP1, RPP1 and SNM1, many of which are shared with the RNase P complex.

Its subcellular location is the membrane. The protein localises to the cytoplasm. It localises to the nucleus. Functions as part of ribonuclease MRP (RNase MRP), which is involved in rRNA processing in mitochondria. In Saccharomyces cerevisiae (strain ATCC 204508 / S288c) (Baker's yeast), this protein is Ribonuclease MRP protein subunit RMP1.